Consider the following 362-residue polypeptide: Adenosine deaminase (362 aa).

Residues His-19 and His-21 each coordinate Zn(2+). Substrate contacts are provided by His-21, Asp-23, and Gly-181. His-208 contacts Zn(2+). The active-site Proton donor is Glu-211. Asp-300 contacts Zn(2+).

Belongs to the metallo-dependent hydrolases superfamily. Adenosine and AMP deaminases family. Adenosine deaminase subfamily. Requires Zn(2+) as cofactor.

It catalyses the reaction adenosine + H2O + H(+) = inosine + NH4(+). The catalysed reaction is 2'-deoxyadenosine + H2O + H(+) = 2'-deoxyinosine + NH4(+). Its function is as follows. Catalyzes the hydrolytic deamination of adenosine and 2-deoxyadenosine. The protein is Adenosine deaminase of Mycolicibacterium gilvum (strain PYR-GCK) (Mycobacterium gilvum (strain PYR-GCK)).